The sequence spans 122 residues: Large ribosomal subunit protein bL20c (122 aa).

This sequence belongs to the bacterial ribosomal protein bL20 family.

It localises to the plastid. It is found in the chloroplast. Its function is as follows. Binds directly to 23S ribosomal RNA and is necessary for the in vitro assembly process of the 50S ribosomal subunit. It is not involved in the protein synthesizing functions of that subunit. The protein is Large ribosomal subunit protein bL20c of Dioscorea elephantipes (Elephant's foot yam).